The sequence spans 552 residues: Steroid transmembrane transporter SLC22A24 (552 aa).

Transmembrane regions (helical) follow at residues 16 to 36 (FQIC…PNIV), 146 to 166 (SMVQ…YGHL), 178 to 200 (LCFL…LVYC), 204 to 226 (FLAG…EWTL), 234 to 254 (IMVL…LAFA), 260 to 280 (ILQL…WKMV), 350 to 370 (VFGL…LILN), 380 to 400 (LFQI…LLTL), 407 to 427 (ISQI…TFLP), 435 to 455 (VVLA…ASVH), 474 to 492 (VSGR…LMAY), and 496 to 516 (LPWI…LLLP).

The protein belongs to the major facilitator (TC 2.A.1) superfamily. Organic cation transporter (TC 2.A.1.19) family. As to expression, localized to the kidney. Highly specific expression pattern in the nephron, localized to segment 3 of the proximal tubule.

Its subcellular location is the cell membrane. The enzyme catalyses estrone 3-sulfate(out) + glutarate(in) = estrone 3-sulfate(in) + glutarate(out). It catalyses the reaction 17beta-estradiol 17-O-(beta-D-glucuronate)(out) + glutarate(in) = 17beta-estradiol 17-O-(beta-D-glucuronate)(in) + glutarate(out). The catalysed reaction is taurocholate(out) + glutarate(in) = taurocholate(in) + glutarate(out). It carries out the reaction 5alpha-androstane-3alpha,17beta-diol 3-O-(beta-D-glucuronate)(out) + glutarate(in) = 5alpha-androstane-3alpha,17beta-diol 3-O-(beta-D-glucuronate)(in) + glutarate(out). The enzyme catalyses glycocholate(out) + glutarate(in) = glycocholate(in) + glutarate(out). It catalyses the reaction dehydroepiandrosterone 3-sulfate(out) + glutarate(in) = dehydroepiandrosterone 3-sulfate(in) + glutarate(out). The catalysed reaction is glutarate(in) + succinate(out) = glutarate(out) + succinate(in). Transport is chloride sensitive and transtimulated by glutaric acid. Transport is inhibited by anionic compounds from different chemical classes. Renal transmembrane organic anion/dicarboxylate exchanger that participates in the reabsorption of conjugated steroids including estradiol-17beta-D-glucuronide (or 17beta-estradiol 17-O-(beta-D-glucuronate)), androstanediol glucuronide (or 5alpha-androstane-3alpha,17beta-diol 3-O-(beta-D-glucuronate)), and estrone 3-sulfate, as well as bile acids taurocholate and glycocholate, driven by an outward gradient of dicarboxylates such as glutarate or succinate. Functionally, similar uptake function as Isoform 1. In terms of biological role, lack of transporter activity. The sequence is that of Steroid transmembrane transporter SLC22A24 from Homo sapiens (Human).